A 321-amino-acid chain; its full sequence is Ribose-phosphate pyrophosphokinase (321 aa).

Residues 44-46 (DGE) and 103-104 (RQ) contribute to the ATP site. The Mg(2+) site is built by His-137 and Asp-179. Lys-202 is a catalytic residue. Residues Arg-204, Asp-228, and 232–236 (DTAGT) each bind D-ribose 5-phosphate.

This sequence belongs to the ribose-phosphate pyrophosphokinase family. Class I subfamily. Homohexamer. Requires Mg(2+) as cofactor.

Its subcellular location is the cytoplasm. The catalysed reaction is D-ribose 5-phosphate + ATP = 5-phospho-alpha-D-ribose 1-diphosphate + AMP + H(+). Its pathway is metabolic intermediate biosynthesis; 5-phospho-alpha-D-ribose 1-diphosphate biosynthesis; 5-phospho-alpha-D-ribose 1-diphosphate from D-ribose 5-phosphate (route I): step 1/1. Its function is as follows. Involved in the biosynthesis of the central metabolite phospho-alpha-D-ribosyl-1-pyrophosphate (PRPP) via the transfer of pyrophosphoryl group from ATP to 1-hydroxyl of ribose-5-phosphate (Rib-5-P). The polypeptide is Ribose-phosphate pyrophosphokinase (Staphylococcus aureus (strain COL)).